The chain runs to 38 residues: Defensin-like peptide 3 (38 aa).

2 disulfides stabilise this stretch: C6–C36 and C13–C29.

In terms of tissue distribution, produced by the crural gland and detected in venom from the spur located on each male hind leg.

It localises to the secreted. In terms of biological role, does not show antimicrobial, myotoxic, hemolytic and cell-promoting activities. This chain is Defensin-like peptide 3, found in Ornithorhynchus anatinus (Duckbill platypus).